The sequence spans 496 residues: Protein disulfide-isomerase (496 aa).

An N-terminal signal peptide occupies residues 1-18; it reads MKFLICALFLAASYVAAS. Thioredoxin domains lie at 19-134 and 349-474; these read AEAE…KKTG and GKLK…ANGE. Active-site nucleophile residues include Cys56, Cys59, Cys397, and Cys400. Cystine bridges form between Cys56-Cys59 and Cys397-Cys400. The tract at residues 473-496 is disordered; that stretch reads GEVADSEPVEETEEEEEAPKKDEL. Positions 476–489 are enriched in acidic residues; it reads ADSEPVEETEEEEE. The Prevents secretion from ER signature appears at 493-496; sequence KDEL.

It belongs to the protein disulfide isomerase family. In terms of assembly, homodimer. As to expression, expressed in all head and body tissues.

The protein resides in the endoplasmic reticulum lumen. It catalyses the reaction Catalyzes the rearrangement of -S-S- bonds in proteins.. Functionally, participates in the folding of proteins containing disulfide bonds. The polypeptide is Protein disulfide-isomerase (Pdi) (Drosophila melanogaster (Fruit fly)).